Reading from the N-terminus, the 142-residue chain is Hemoglobin subunit alpha (142 aa).

A Globin domain is found at 2-142 (VLSPDDKKHV…VSTVLTSKYR (141 aa)). Ser-4 is modified (phosphoserine). Lys-8 and Lys-12 each carry N6-succinyllysine. Lys-17 is modified (N6-acetyllysine; alternate). An N6-succinyllysine; alternate modification is found at Lys-17. Position 25 is a phosphotyrosine (Tyr-25). Ser-36 is subject to Phosphoserine. At Lys-41 the chain carries N6-succinyllysine. A Phosphoserine modification is found at Ser-50. Position 59 (His-59) interacts with O2. His-88 is a heme b binding site. A Phosphoserine modification is found at Ser-103. Thr-109 carries the post-translational modification Phosphothreonine. Ser-125 and Ser-132 each carry phosphoserine. Phosphothreonine is present on residues Thr-135 and Thr-138. Residue Ser-139 is modified to Phosphoserine.

This sequence belongs to the globin family. In terms of assembly, heterotetramer of two alpha chains and two beta chains. In terms of tissue distribution, red blood cells.

Functionally, involved in oxygen transport from the lung to the various peripheral tissues. Hemopressin acts as an antagonist peptide of the cannabinoid receptor CNR1. Hemopressin-binding efficiently blocks cannabinoid receptor CNR1 and subsequent signaling. In Papio anubis (Olive baboon), this protein is Hemoglobin subunit alpha (HBA).